The sequence spans 338 residues: Protein SPATA31F3 (338 aa).

The chain crosses the membrane as a helical span at residues 7–29; sequence VLWDVGYPLYTYGSICIIALIIW. A Phosphoserine modification is found at S152. Basic and acidic residues predominate over residues 290–306; sequence DRTKNIEKSPTVTKDHV. The disordered stretch occupies residues 290-338; it reads DRTKNIEKSPTVTKDHVWGATTQKTTEDPEAQPPSTEEEGLIFCDAPSA.

It belongs to the SPATA31 family.

The protein localises to the membrane. The polypeptide is Protein SPATA31F3 (Homo sapiens (Human)).